The primary structure comprises 234 residues: LexA repressor (234 aa).

Residues F26–T46 constitute a DNA-binding region (H-T-H motif). The segment at A73–N107 is disordered. Residues S155 and K192 each act as for autocatalytic cleavage activity in the active site.

Belongs to the peptidase S24 family. Homodimer.

It carries out the reaction Hydrolysis of Ala-|-Gly bond in repressor LexA.. Its function is as follows. Represses a number of genes involved in the response to DNA damage (SOS response), including recA and lexA. In the presence of single-stranded DNA, RecA interacts with LexA causing an autocatalytic cleavage which disrupts the DNA-binding part of LexA, leading to derepression of the SOS regulon and eventually DNA repair. In Caulobacter vibrioides (strain ATCC 19089 / CIP 103742 / CB 15) (Caulobacter crescentus), this protein is LexA repressor.